The chain runs to 288 residues: ATP phosphoribosyltransferase (288 aa).

The protein belongs to the ATP phosphoribosyltransferase family. Long subfamily. Requires Mg(2+) as cofactor.

The protein localises to the cytoplasm. The enzyme catalyses 1-(5-phospho-beta-D-ribosyl)-ATP + diphosphate = 5-phospho-alpha-D-ribose 1-diphosphate + ATP. It functions in the pathway amino-acid biosynthesis; L-histidine biosynthesis; L-histidine from 5-phospho-alpha-D-ribose 1-diphosphate: step 1/9. Its activity is regulated as follows. Feedback inhibited by histidine. Functionally, catalyzes the condensation of ATP and 5-phosphoribose 1-diphosphate to form N'-(5'-phosphoribosyl)-ATP (PR-ATP). Has a crucial role in the pathway because the rate of histidine biosynthesis seems to be controlled primarily by regulation of HisG enzymatic activity. The sequence is that of ATP phosphoribosyltransferase (hisG) from Methanocaldococcus jannaschii (strain ATCC 43067 / DSM 2661 / JAL-1 / JCM 10045 / NBRC 100440) (Methanococcus jannaschii).